The primary structure comprises 361 residues: Mitogen-activated protein kinase 14A (361 aa).

In terms of domain architecture, Protein kinase spans 25 to 309 (YQNLSPVGSG…AAEALAHPYF (285 aa)). ATP is bound by residues 31–39 (VGSGAYGSV) and Lys54. The Proton acceptor role is filled by Asp169. Thr181 carries the post-translational modification Phosphothreonine; by MAP2K3. The TXY signature appears at 181–183 (TGY). Tyr183 bears the Phosphotyrosine; by MAP2K3 mark.

It belongs to the protein kinase superfamily. CMGC Ser/Thr protein kinase family. MAP kinase subfamily. Mg(2+) serves as cofactor. Post-translationally, dually phosphorylated on Thr-181 and Tyr-183, which activates the enzyme.

It localises to the cytoplasm. It is found in the nucleus. The enzyme catalyses L-seryl-[protein] + ATP = O-phospho-L-seryl-[protein] + ADP + H(+). It carries out the reaction L-threonyl-[protein] + ATP = O-phospho-L-threonyl-[protein] + ADP + H(+). With respect to regulation, activated by threonine and tyrosine phosphorylation by the dual specificity kinase, MKK3. Functionally, serine/threonine kinase which acts as an essential component of the MAP kinase signal transduction pathway. Mapk14a is one of the four p38 MAPKs which play an important role in the cascades of cellular responses evoked by extracellular stimuli such as pro-inflammatory cytokines or physical stress leading to direct activation of transcription factors. Accordingly, p38 MAPKs phosphorylate a broad range of proteins and it has been estimated that they may have approximately 200 to 300 substrates each. Some of the targets are downstream kinases which are activated through phosphorylation and further phosphorylate additional targets. Required for cytokinesis on the future dorsal side of the blastodisc, suggesting a role in symmetrical and synchronous blastomere cleavage. This Danio rerio (Zebrafish) protein is Mitogen-activated protein kinase 14A (mapk14a).